A 143-amino-acid polypeptide reads, in one-letter code: Insulin-like growth factor 1 (143 aa).

A signal peptide spans 1-32 (MITPTVKMRILSSSHLFYLALCLLTFTSSATA). Residues 33–61 (GPETLCGAELVDALQFVCGDRGFYFNKPT) are b. Intrachain disulfides connect Cys38-Cys80, Cys50-Cys93, and Cys79-Cys84. Positions 62-73 (GYGSSSRRAPQT) are c. Residues 74–94 (GIVDECCFRSCDLRRLEMYCA) are a. The segment at 95 to 102 (PLKPAKAA) is d. Residues 99–143 (AKAARSVRAQRHTDMPKTQKYQPPSTNKKMKSQRRRKGSTFEEHK) form a disordered region. Positions 103-143 (RSVRAQRHTDMPKTQKYQPPSTNKKMKSQRRRKGSTFEEHK) are cleaved as a propeptide — e peptide. A compositionally biased stretch (basic residues) spans 126–136 (KKMKSQRRRKG).

The protein belongs to the insulin family. As to quaternary structure, forms a ternary complex with IGFR1 and ITGAV:ITGB3. Forms a ternary complex with IGFR1 and ITGA6:ITGB4. Forms a ternary complex with IGFBP3 and ALS.

It is found in the secreted. The insulin-like growth factors, isolated from plasma, are structurally and functionally related to insulin but have a much higher growth-promoting activity. May be a physiological regulator of [1-14C]-2-deoxy-D-glucose (2DG) transport and glycogen synthesis in osteoblasts. Stimulates glucose transport in bone-derived osteoblastic (PyMS) cells and is effective at much lower concentrations than insulin, not only regarding glycogen and DNA synthesis but also with regard to enhancing glucose uptake. May play a role in synapse maturation. Ca(2+)-dependent exocytosis of IGF1 is required for sensory perception of smell in the olfactory bulb. Acts as a ligand for IGF1R. Binds to the alpha subunit of IGF1R, leading to the activation of the intrinsic tyrosine kinase activity which autophosphorylates tyrosine residues in the beta subunit thus initiating a cascade of down-stream signaling events leading to activation of the PI3K-AKT/PKB and the Ras-MAPK pathways. Binds to integrins ITGAV:ITGB3 and ITGA6:ITGB4. Its binding to integrins and subsequent ternary complex formation with integrins and IGFR1 are essential for IGF1 signaling. Induces the phosphorylation and activation of IGFR1, MAPK3/ERK1, MAPK1/ERK2 and AKT1. As part of the MAPK/ERK signaling pathway, acts as a negative regulator of apoptosis in cardiomyocytes via promotion of STUB1/CHIP-mediated ubiquitination and degradation of ICER-type isoforms of CREM. The polypeptide is Insulin-like growth factor 1 (Oryctolagus cuniculus (Rabbit)).